The following is a 351-amino-acid chain: Porphobilinogen deaminase (351 aa).

Position 242 is an S-(dipyrrolylmethanemethyl)cysteine (C242).

This sequence belongs to the HMBS family. Monomer. Requires dipyrromethane as cofactor.

It carries out the reaction 4 porphobilinogen + H2O = hydroxymethylbilane + 4 NH4(+). Its pathway is porphyrin-containing compound metabolism; protoporphyrin-IX biosynthesis; coproporphyrinogen-III from 5-aminolevulinate: step 2/4. Functionally, tetrapolymerization of the monopyrrole PBG into the hydroxymethylbilane pre-uroporphyrinogen in several discrete steps. This Rickettsia peacockii (strain Rustic) protein is Porphobilinogen deaminase.